The primary structure comprises 276 residues: B3 domain-containing protein REM22 (276 aa).

A DNA-binding region (TF-B3) is located at residues 11–115 (SETMSIQDTV…VFHFCVYEYG (105 aa)). A disordered region spans residues 141-164 (GNEESTKGLEESPRRGGTSRRRAK). The span at 144–154 (ESTKGLEESPR) shows a compositional bias: basic and acidic residues.

Its subcellular location is the nucleus. The protein is B3 domain-containing protein REM22 (REM22) of Arabidopsis thaliana (Mouse-ear cress).